The primary structure comprises 155 residues: Ribosome maturation factor RimP (155 aa).

It belongs to the RimP family.

It localises to the cytoplasm. Required for maturation of 30S ribosomal subunits. In Maridesulfovibrio salexigens (strain ATCC 14822 / DSM 2638 / NCIMB 8403 / VKM B-1763) (Desulfovibrio salexigens), this protein is Ribosome maturation factor RimP.